Reading from the N-terminus, the 58-residue chain is Protein translocase subunit SecE (58 aa).

The helical transmembrane segment at 38–58 (IVMAFVGLLAYLIQLVLAFII) threads the bilayer.

This sequence belongs to the SecE/SEC61-gamma family. Component of the Sec protein translocase complex. Heterotrimer consisting of SecY (alpha), SecG (beta) and SecE (gamma) subunits. The heterotrimers can form oligomers, although 1 heterotrimer is thought to be able to translocate proteins. Interacts with the ribosome. May interact with SecDF, and other proteins may be involved.

Its subcellular location is the cell membrane. In terms of biological role, essential subunit of the Sec protein translocation channel SecYEG. Clamps together the 2 halves of SecY. May contact the channel plug during translocation. In Acidianus ambivalens (Desulfurolobus ambivalens), this protein is Protein translocase subunit SecE.